The following is a 94-amino-acid chain: Small ribosomal subunit protein uS17 (94 aa).

The protein belongs to the universal ribosomal protein uS17 family. Part of the 30S ribosomal subunit.

Its function is as follows. One of the primary rRNA binding proteins, it binds specifically to the 5'-end of 16S ribosomal RNA. This chain is Small ribosomal subunit protein uS17, found in Deinococcus geothermalis (strain DSM 11300 / CIP 105573 / AG-3a).